A 156-amino-acid chain; its full sequence is MNFNATLIGQSITFIFFVWFSMKFVWPPIMNALETRKKQIADGLAAADRGKHELELAAKKAGDNMRDAKAQAAEVIAQAEKRAAQIVEEAKLAAKEEGDRQLAAAQANIEQEANRAREGLREQVAALAVAGAEKILRREVNAQTHADLLSQLKAEL.

A helical membrane pass occupies residues 7-29 (LIGQSITFIFFVWFSMKFVWPPI).

Belongs to the ATPase B chain family. As to quaternary structure, F-type ATPases have 2 components, F(1) - the catalytic core - and F(0) - the membrane proton channel. F(1) has five subunits: alpha(3), beta(3), gamma(1), delta(1), epsilon(1). F(0) has three main subunits: a(1), b(2) and c(10-14). The alpha and beta chains form an alternating ring which encloses part of the gamma chain. F(1) is attached to F(0) by a central stalk formed by the gamma and epsilon chains, while a peripheral stalk is formed by the delta and b chains.

The protein localises to the cell inner membrane. In terms of biological role, f(1)F(0) ATP synthase produces ATP from ADP in the presence of a proton or sodium gradient. F-type ATPases consist of two structural domains, F(1) containing the extramembraneous catalytic core and F(0) containing the membrane proton channel, linked together by a central stalk and a peripheral stalk. During catalysis, ATP synthesis in the catalytic domain of F(1) is coupled via a rotary mechanism of the central stalk subunits to proton translocation. Component of the F(0) channel, it forms part of the peripheral stalk, linking F(1) to F(0). The polypeptide is ATP synthase subunit b (Thiobacillus denitrificans (strain ATCC 25259 / T1)).